A 1317-amino-acid chain; its full sequence is Clustered mitochondria protein homolog (1317 aa).

The region spanning 382 to 626 is the Clu domain; the sequence is DITRSQESYL…RVTPLDVTWQ (245 aa). The span at 669–689 shows a compositional bias: basic and acidic residues; that stretch reads KAQEEAANKEQSSEVTESKEQ. 2 disordered regions span residues 669 to 700 and 939 to 966; these read KAQE…EALD and ANGV…PSRA. TPR repeat units lie at residues 1040 to 1073, 1082 to 1115, and 1124 to 1157; these read AKLY…TERT, ILAY…WKII, and ITTM…CESL. Disordered stretches follow at residues 1252 to 1273 and 1288 to 1317; these read VQPQ…ANAS and GGDA…KSSA.

Belongs to the CLU family. In terms of assembly, may associate with the eukaryotic translation initiation factor 3 (eIF-3) complex.

The protein localises to the cytoplasm. Functionally, mRNA-binding protein involved in proper cytoplasmic distribution of mitochondria. The polypeptide is Clustered mitochondria protein homolog (Neosartorya fischeri (strain ATCC 1020 / DSM 3700 / CBS 544.65 / FGSC A1164 / JCM 1740 / NRRL 181 / WB 181) (Aspergillus fischerianus)).